The chain runs to 333 residues: Ig gamma-2B chain C region (333 aa).

Ig-like domains follow at residues 6–96 (PSVY…KKVE), 124–223 (PSVF…KTIS), and 232–328 (PQVY…KSIS). Disulfide bonds link C27–C80, C147–C207, and C253–C311.

The sequence is that of Ig gamma-2B chain C region (Igh-1a) from Rattus norvegicus (Rat).